Here is a 98-residue protein sequence, read N- to C-terminus: NADH-ubiquinone oxidoreductase chain 4L (98 aa).

The next 3 helical transmembrane spans lie at Met1–Ile21, Ser29–Leu49, and Ile58–Leu78.

The protein belongs to the complex I subunit 4L family. Core subunit of respiratory chain NADH dehydrogenase (Complex I) which is composed of 45 different subunits.

The protein resides in the mitochondrion inner membrane. It carries out the reaction a ubiquinone + NADH + 5 H(+)(in) = a ubiquinol + NAD(+) + 4 H(+)(out). Core subunit of the mitochondrial membrane respiratory chain NADH dehydrogenase (Complex I) which catalyzes electron transfer from NADH through the respiratory chain, using ubiquinone as an electron acceptor. Part of the enzyme membrane arm which is embedded in the lipid bilayer and involved in proton translocation. In Semnopithecus entellus (Northern plains gray langur), this protein is NADH-ubiquinone oxidoreductase chain 4L (MT-ND4L).